Reading from the N-terminus, the 368-residue chain is Putative J domain-containing protein R445 (368 aa).

The region spanning 13-83 is the J domain; that stretch reads DLYKILGLTN…KQRNEYNQRL (71 aa).

This Acanthamoeba polyphaga mimivirus (APMV) protein is Putative J domain-containing protein R445.